Reading from the N-terminus, the 161-residue chain is Anaerobic nitrite reductase Glb1-1 (161 aa).

Residues Cys8–Lys157 enclose the Globin domain. The Homodimerization signature appears at Glu41–Ser45. Ser51, Lys65, His69, Lys99, Thr103, and His104 together coordinate heme b. The short motif at Asn111–Asp123 is the Homodimerization element.

The protein belongs to the plant globin family. As to quaternary structure, homodimer. Requires heme b as cofactor. Mainly expressed in root nodules, and, to a lower extent, in leaves, roots, stems, flowers and fruits. Accumulates in mature root nodules.

The catalysed reaction is Fe(III)-heme b-[protein] + nitric oxide + H2O = Fe(II)-heme b-[protein] + nitrite + 2 H(+). Functionally, phytoglobin that reduces nitrite to nitric oxide (NO) under anoxic conditions (e.g. during flooding or in waterlogged soil) and upon root nodulation. Required for general plant development and during nodulation, especially for the onset of symbiosis. Monitors nitric oxide (NO) levels during early phase of the nitrogen-fixing symbiosis and buffers oxygen in functioning nodules. May not function as an oxygen storage or transport protein. Has an unusually high affinity for O(2) through a hexacoordinate heme iron because of a very low dissociation constant. This is Anaerobic nitrite reductase Glb1-1 from Lotus japonicus (Lotus corniculatus var. japonicus).